A 72-amino-acid chain; its full sequence is Cell division protein ZapB (72 aa).

Residues 3–71 (LSIIDQLEEK…LRSLLGQIDN (69 aa)) are a coiled coil.

Belongs to the ZapB family. Homodimer. The ends of the coiled-coil dimer bind to each other, forming polymers. Interacts with FtsZ.

It is found in the cytoplasm. In terms of biological role, non-essential, abundant cell division factor that is required for proper Z-ring formation. It is recruited early to the divisome by direct interaction with FtsZ, stimulating Z-ring assembly and thereby promoting cell division earlier in the cell cycle. Its recruitment to the Z-ring requires functional FtsA or ZipA. The chain is Cell division protein ZapB from Haemophilus ducreyi (strain 35000HP / ATCC 700724).